Here is a 632-residue protein sequence, read N- to C-terminus: Chaperone protein HtpG (632 aa).

Positions 1–339 (MTQQTMSFQA…SSDLPLNVSR (339 aa)) are a; substrate-binding. Residues 340 to 559 (EILQESRDVK…DNDMSGYLQR (220 aa)) form a b region. The c stretch occupies residues 560 to 632 (MLKAAGQSAP…TNALLLSRAA (73 aa)).

The protein belongs to the heat shock protein 90 family. As to quaternary structure, homodimer.

The protein resides in the cytoplasm. In terms of biological role, molecular chaperone. Has ATPase activity. In Burkholderia mallei (strain NCTC 10247), this protein is Chaperone protein HtpG.